An 872-amino-acid polypeptide reads, in one-letter code: Protein translocase subunit SecA (872 aa).

Residues Q87, 105–109 (GEGKT), and D510 contribute to the ATP site. C847, C849, C858, and C859 together coordinate Zn(2+).

The protein belongs to the SecA family. As to quaternary structure, monomer and homodimer. Part of the essential Sec protein translocation apparatus which comprises SecA, SecYEG and auxiliary proteins SecDF-YajC and YidC. Zn(2+) serves as cofactor.

It localises to the cell inner membrane. The protein resides in the cytoplasm. It catalyses the reaction ATP + H2O + cellular proteinSide 1 = ADP + phosphate + cellular proteinSide 2.. In terms of biological role, part of the Sec protein translocase complex. Interacts with the SecYEG preprotein conducting channel. Has a central role in coupling the hydrolysis of ATP to the transfer of proteins into and across the cell membrane, serving as an ATP-driven molecular motor driving the stepwise translocation of polypeptide chains across the membrane. In Aliarcobacter butzleri (strain RM4018) (Arcobacter butzleri), this protein is Protein translocase subunit SecA.